Consider the following 371-residue polypeptide: Ribosomal RNA small subunit methyltransferase H (371 aa).

Residues Gly92 to His94, Asp111, Tyr138, Asp159, and Gln166 contribute to the S-adenosyl-L-methionine site.

Belongs to the methyltransferase superfamily. RsmH family.

It localises to the cytoplasm. The catalysed reaction is cytidine(1402) in 16S rRNA + S-adenosyl-L-methionine = N(4)-methylcytidine(1402) in 16S rRNA + S-adenosyl-L-homocysteine + H(+). In terms of biological role, specifically methylates the N4 position of cytidine in position 1402 (C1402) of 16S rRNA. This is Ribosomal RNA small subunit methyltransferase H from Mycolicibacterium gilvum (strain PYR-GCK) (Mycobacterium gilvum (strain PYR-GCK)).